Reading from the N-terminus, the 153-residue chain is Aspartate carbamoyltransferase regulatory chain (153 aa).

Residues Cys109, Cys114, Cys138, and Cys141 each contribute to the Zn(2+) site.

The protein belongs to the PyrI family. As to quaternary structure, contains catalytic and regulatory chains. Zn(2+) is required as a cofactor.

Functionally, involved in allosteric regulation of aspartate carbamoyltransferase. This chain is Aspartate carbamoyltransferase regulatory chain, found in Cronobacter sakazakii (strain ATCC BAA-894) (Enterobacter sakazakii).